We begin with the raw amino-acid sequence, 145 residues long: Transcription antitermination protein NusB (145 aa).

The protein belongs to the NusB family.

Functionally, involved in transcription antitermination. Required for transcription of ribosomal RNA (rRNA) genes. Binds specifically to the boxA antiterminator sequence of the ribosomal RNA (rrn) operons. The protein is Transcription antitermination protein NusB of Aromatoleum aromaticum (strain DSM 19018 / LMG 30748 / EbN1) (Azoarcus sp. (strain EbN1)).